Consider the following 297-residue polypeptide: Formamidopyrimidine-DNA glycosylase (297 aa).

Pro-2 acts as the Schiff-base intermediate with DNA in catalysis. Glu-3 (proton donor) is an active-site residue. Catalysis depends on Lys-61, which acts as the Proton donor; for beta-elimination activity. Arg-120 and Arg-176 together coordinate DNA. Residues 262–296 (HVYGRQGQPCDRCGTAIVRESFMNRGSHFCPRCQR) form an FPG-type zinc finger. Arg-286 serves as the catalytic Proton donor; for delta-elimination activity.

Belongs to the FPG family. Monomer. Requires Zn(2+) as cofactor.

The catalysed reaction is Hydrolysis of DNA containing ring-opened 7-methylguanine residues, releasing 2,6-diamino-4-hydroxy-5-(N-methyl)formamidopyrimidine.. It catalyses the reaction 2'-deoxyribonucleotide-(2'-deoxyribose 5'-phosphate)-2'-deoxyribonucleotide-DNA = a 3'-end 2'-deoxyribonucleotide-(2,3-dehydro-2,3-deoxyribose 5'-phosphate)-DNA + a 5'-end 5'-phospho-2'-deoxyribonucleoside-DNA + H(+). Functionally, involved in base excision repair of DNA damaged by oxidation or by mutagenic agents. Acts as a DNA glycosylase that recognizes and removes damaged bases. Has a preference for oxidized purines, such as 7,8-dihydro-8-oxoguanine (8-oxoG). Has AP (apurinic/apyrimidinic) lyase activity and introduces nicks in the DNA strand. Cleaves the DNA backbone by beta-delta elimination to generate a single-strand break at the site of the removed base with both 3'- and 5'-phosphates. In Leifsonia xyli subsp. xyli (strain CTCB07), this protein is Formamidopyrimidine-DNA glycosylase.